Reading from the N-terminus, the 361-residue chain is MLYNLLLPHIHNSHIANLFHYITFRSGLAIIITLSLSFITGPILIKFLRSLQKNGQPIRSDGPESHQTKAGTPTMGGIMIILSSCLSTLLLADLTNKYIWITLFGFISFGIIGFMDDYAKVTKNNHYGVRGKSKLLLQGIISLIICILLEYLDKNPSHLLNVPFFKNLSLDLGYFYIVFAIFVIVGSSNAVNLTDGLDGLATVPIAFTAGSFALISYLVGNLIYSNYLQLTYIPNTGELTVLCAGLVGSCLGFLWFNAQPAEVFMGDTGSLSLGGVLGIISVITKHEIVLAIVGGLFVIETASVILQVYYFKATKGKRIFKMAPLHHHFEKHGWAESKVVIRFWIISVIFALIGLSSLKLR.

The next 10 membrane-spanning stretches (helical) occupy residues 28–48 (LAII…IKFL), 74–94 (TMGG…LADL), 99–119 (IWIT…DDYA), 133–153 (SKLL…EYLD), 168–188 (LSLD…VGSS), 203–223 (VPIA…GNLI), 236–256 (TGEL…FLWF), 263–283 (VFMG…ISVI), 288–308 (IVLA…ILQV), and 338–358 (KVVI…LSSL).

Belongs to the glycosyltransferase 4 family. MraY subfamily. It depends on Mg(2+) as a cofactor.

It is found in the cell inner membrane. The enzyme catalyses UDP-N-acetyl-alpha-D-muramoyl-L-alanyl-gamma-D-glutamyl-meso-2,6-diaminopimeloyl-D-alanyl-D-alanine + di-trans,octa-cis-undecaprenyl phosphate = di-trans,octa-cis-undecaprenyl diphospho-N-acetyl-alpha-D-muramoyl-L-alanyl-D-glutamyl-meso-2,6-diaminopimeloyl-D-alanyl-D-alanine + UMP. Its pathway is cell wall biogenesis; peptidoglycan biosynthesis. Its function is as follows. Catalyzes the initial step of the lipid cycle reactions in the biosynthesis of the cell wall peptidoglycan: transfers peptidoglycan precursor phospho-MurNAc-pentapeptide from UDP-MurNAc-pentapeptide onto the lipid carrier undecaprenyl phosphate, yielding undecaprenyl-pyrophosphoryl-MurNAc-pentapeptide, known as lipid I. In Rickettsia felis (strain ATCC VR-1525 / URRWXCal2) (Rickettsia azadi), this protein is Phospho-N-acetylmuramoyl-pentapeptide-transferase.